A 510-amino-acid chain; its full sequence is NKAP family protein (510 aa).

Residues 1–22 show a composition bias toward basic and acidic residues; that stretch reads MSHRERDRDRDRDSDRDRDRNR. Disordered stretches follow at residues 1–128, 149–220, and 239–401; these read MSHR…VEIQ, ERKD…NYNG, and VYER…PISE. Residues 23-39 are compositionally biased toward basic residues; sequence YSRSRSRGSRSRSRSRS. Basic and acidic residues predominate over residues 40–89; that stretch reads RSRDRNRNRDYNKDRSSNRDSYYNDRDYKKDRSSNRDRDYYDRDRNRDYK. The segment covering 96–105 has biased composition (gly residues); the sequence is SSGGGGGGSG. Composition is skewed to low complexity over residues 112–123 and 184–219; these read SSSYRESNSNNS and NNNN…SNYN. Positions 262 to 273 are enriched in basic residues; that stretch reads NKKKSKKSRRKS. The span at 274-283 shows a compositional bias: low complexity; sequence SSNSDSSSSD. The span at 292–322 shows a compositional bias: basic residues; that stretch reads REKRKKSKSRKDKKKRKEKKKHQRKSSKRSS. Residues 342-351 are compositionally biased toward basic and acidic residues; the sequence is DSDRSDSEGR. Residues 352–367 are compositionally biased toward basic residues; the sequence is SRKKRSKKRSKKRHDH. The span at 368 to 383 shows a compositional bias: basic and acidic residues; that stretch reads HKESVHDASMWEEKVE.

This sequence belongs to the NKAP family.

This Dictyostelium discoideum (Social amoeba) protein is NKAP family protein.